Reading from the N-terminus, the 542-residue chain is Putative ankyrin repeat protein FPV115 (542 aa).

8 ANK repeats span residues 33-62, 157-186, 218-247, 251-281, 285-314, 316-345, 347-375, and 378-407; these read FRNL…DPNS, DGLL…KTNL, NDIN…DINT, KGKT…DINV, EGLT…DVKV, TTST…EFIT, DYLS…DVNS, and CIST…NINA.

In Fowlpox virus (strain NVSL) (FPV), this protein is Putative ankyrin repeat protein FPV115.